Here is a 238-residue protein sequence, read N- to C-terminus: Protein A47 (238 aa).

The protein belongs to the orthopoxvirus A47 protein family.

This chain is Protein A47, found in Vaccinia virus (strain Ankara) (VACV).